A 226-amino-acid chain; its full sequence is Protein-L-isoaspartate(D-aspartate) O-methyltransferase (226 aa).

Residues 57 to 60 (VTIS), His-65, Ser-89, 115 to 116 (EH), 147 to 148 (DG), and Thr-222 each bind S-adenosyl-L-homocysteine. Ser-60 is an active-site residue.

Belongs to the methyltransferase superfamily. L-isoaspartyl/D-aspartyl protein methyltransferase family. Monomer.

Its subcellular location is the cytoplasm. The protein localises to the cytosol. It carries out the reaction [protein]-L-isoaspartate + S-adenosyl-L-methionine = [protein]-L-isoaspartate alpha-methyl ester + S-adenosyl-L-homocysteine. Its function is as follows. Initiates the repair of damaged proteins by catalyzing methyl esterification of L-isoaspartyl and D-aspartyl residues produced by spontaneous isomerization and racemization of L-aspartyl and L-asparaginyl residues in aging peptides and proteins. In Drosophila melanogaster (Fruit fly), this protein is Protein-L-isoaspartate(D-aspartate) O-methyltransferase (Pcmt).